We begin with the raw amino-acid sequence, 91 residues long: Defensin-like protein 82 (91 aa).

The signal sequence occupies residues 1–27 (MAIKKFSSLLLPLLMVLALVVLPIISG). 4 disulfide bridges follow: Cys-34-Cys-72, Cys-41-Cys-62, Cys-47-Cys-70, and Cys-51-Cys-71.

It belongs to the DEFL family.

The protein localises to the secreted. In Arabidopsis thaliana (Mouse-ear cress), this protein is Defensin-like protein 82.